The chain runs to 219 residues: Protein-L-isoaspartate O-methyltransferase (219 aa).

Serine 64 is an active-site residue.

It belongs to the methyltransferase superfamily. L-isoaspartyl/D-aspartyl protein methyltransferase family.

The protein localises to the cytoplasm. The enzyme catalyses [protein]-L-isoaspartate + S-adenosyl-L-methionine = [protein]-L-isoaspartate alpha-methyl ester + S-adenosyl-L-homocysteine. Catalyzes the methyl esterification of L-isoaspartyl residues in peptides and proteins that result from spontaneous decomposition of normal L-aspartyl and L-asparaginyl residues. It plays a role in the repair and/or degradation of damaged proteins. The polypeptide is Protein-L-isoaspartate O-methyltransferase (Chlorobaculum parvum (strain DSM 263 / NCIMB 8327) (Chlorobium vibrioforme subsp. thiosulfatophilum)).